We begin with the raw amino-acid sequence, 246 residues long: Probable transcriptional regulatory protein PM0980 (246 aa).

It belongs to the TACO1 family.

The protein resides in the cytoplasm. The polypeptide is Probable transcriptional regulatory protein PM0980 (Pasteurella multocida (strain Pm70)).